We begin with the raw amino-acid sequence, 33 residues long: Large ribosomal subunit protein eL21 (33 aa).

Belongs to the eukaryotic ribosomal protein eL21 family. As to quaternary structure, component of the large ribosomal subunit.

It is found in the cytoplasm. The protein resides in the cytosol. It localises to the endoplasmic reticulum. Component of the large ribosomal subunit. The ribosome is a large ribonucleoprotein complex responsible for the synthesis of proteins in the cell. This is Large ribosomal subunit protein eL21 (rpl21) from Xenopus laevis (African clawed frog).